Consider the following 139-residue polypeptide: Holo-[acyl-carrier-protein] synthase (139 aa).

Residues Asp8 and Glu57 each contribute to the Mg(2+) site.

Belongs to the P-Pant transferase superfamily. AcpS family. Mg(2+) is required as a cofactor.

It is found in the cytoplasm. The catalysed reaction is apo-[ACP] + CoA = holo-[ACP] + adenosine 3',5'-bisphosphate + H(+). In terms of biological role, transfers the 4'-phosphopantetheine moiety from coenzyme A to a Ser of acyl-carrier-protein. The sequence is that of Holo-[acyl-carrier-protein] synthase from Sinorhizobium medicae (strain WSM419) (Ensifer medicae).